We begin with the raw amino-acid sequence, 47 residues long: Potassium channel toxin alpha-KTx 7.1 (47 aa).

The first 12 residues, 1 to 12 (RGSVDYKDDDDK), serve as a signal peptide directing secretion. Disulfide bonds link C16-C37, C22-C42, and C26-C44.

This sequence belongs to the short scorpion toxin superfamily. Potassium channel inhibitor family. Alpha-KTx 07 subfamily. Expressed by the venom gland.

The protein localises to the secreted. Its function is as follows. Potent inhibitor of the A-type voltage-gated potassium channels. Most potent inhibitor of Kv1.2/KCNA2 channels. Reversibly block the Shaker B potassium-channels (Kv1.1 sub-family). The protein is Potassium channel toxin alpha-KTx 7.1 (PTX-1) of Pandinus imperator (Emperor scorpion).